The following is a 264-amino-acid chain: Putative serine carboxypeptidase-like 53 (264 aa).

The N-terminal stretch at 1-23 (MGKLQDWSITTCLFLFFLHASQT) is a signal peptide. N-linked (GlcNAc...) asparagine glycosylation is found at Asn65, Asn101, Asn153, and Asn184.

Belongs to the peptidase S10 family.

The protein localises to the secreted. The chain is Putative serine carboxypeptidase-like 53 (SCPL53) from Arabidopsis thaliana (Mouse-ear cress).